The following is a 414-amino-acid chain: TnpB-like protein MJ1635 (414 aa).

Positions 329, 332, 346, and 349 each coordinate Zn(2+).

In the N-terminal section; belongs to the transposase 2 family. It in the C-terminal section; belongs to the transposase 35 family.

This chain is TnpB-like protein MJ1635, found in Methanocaldococcus jannaschii (strain ATCC 43067 / DSM 2661 / JAL-1 / JCM 10045 / NBRC 100440) (Methanococcus jannaschii).